The chain runs to 793 residues: E3 UFM1-protein ligase 1 (793 aa).

A required for E3 UFM1-protein ligase activity region spans residues 2 to 212 (AADWEEIRRL…INNLLNLYGF (211 aa)). Disordered stretches follow at residues 405 to 472 (ALLE…RNKL) and 745 to 793 (GAEK…SVTE). The span at 427–439 (EGGGSVKSGGGGN) shows a compositional bias: gly residues. The span at 767-781 (SLQRELHSLSRDIKD) shows a compositional bias: basic and acidic residues.

It belongs to the UFL1 family. As to quaternary structure, catalytic component of the UFM1 ribosome E3 ligase (UREL) complex. Interacts with E2-like enzyme UFC1.

Its subcellular location is the endoplasmic reticulum membrane. It is found in the cytoplasm. It localises to the cytosol. The protein resides in the nucleus. The protein localises to the chromosome. In terms of biological role, E3 protein ligase that mediates ufmylation, the covalent attachment of the ubiquitin-like modifier UFM1 to lysine residues on target proteins, and which plays a key role in various processes, such as ribosome recycling, response to DNA damage, interferon response or reticulophagy (also called ER-phagy). As part of the UREL complex, plays a key role in ribosome recycling by catalyzing mono-ufmylation of RPL26/uL24 subunit of the 60S ribosome. Ufmylation of RPL26/uL24 occurs on free 60S ribosomes following ribosome dissociation: it weakens the junction between post-termination 60S subunits and SEC61 translocons, promoting release and recycling of the large ribosomal subunit from the endoplasmic reticulum membrane. Ufmylation of RPL26/uL24 and subsequent 60S ribosome recycling either take place after normal termination of translation or after ribosome stalling during cotranslational translocation at the endoplasmic reticulum. Involved in reticulophagy in response to endoplasmic reticulum stress by mediating ufmylation of proteins such as CYB5R3 and RPN1, thereby promoting lysosomal degradation of ufmylated proteins. Ufmylation in response to endoplasmic reticulum stress is essential for processes such as hematopoiesis, blood vessel morphogenesis or inflammatory response. The protein is E3 UFM1-protein ligase 1 of Danio rerio (Zebrafish).